The chain runs to 587 residues: General negative regulator of transcription subunit 4 (587 aa).

The segment at 33–78 (CPLCIEPMDITDKNFFPCPCGYQICQFCYNNIRQNPELNGRCPACR) adopts an RING-type zinc-finger fold. Positions 94–128 (EELKMERAKLARKEKERKHREKERKENEYTNRKHL) form a coiled coil. One can recognise an RRM domain in the interval 137–228 (NLVYVVGINP…YMDGRLIKAA (92 aa)). The segment at 229-256 (YGTTKYCSSYLRGLPCPNPNCMFLHEPG) adopts a C3H1-type zinc-finger fold. A Glycyl lysine isopeptide (Lys-Gly) (interchain with G-Cter in ubiquitin) cross-link involves residue lysine 270. A Phosphothreonine modification is found at threonine 310. At serine 312 the chain carries Phosphoserine. Residue threonine 326 is modified to Phosphothreonine. At serine 360 the chain carries Phosphoserine. Positions 370 to 412 (TLNDSLGHHTTPTTENTITSTTTTTNTNATSHSHGSKKKQSLA) are disordered. Over residues 377–402 (HHTTPTTENTITSTTTTTNTNATSHS) the composition is skewed to low complexity.

Forms a NOT protein complex that comprises NOT1, NOT2, NOT3, NOT4 and NOT5. Subunit of the 1.0 MDa CCR4-NOT core complex that contains CCR4, CAF1, NOT1, NOT2, NOT3, NOT4, NOT5, CAF40 and CAF130. In the complex interacts with NOT1. The core complex probably is part of a less characterized 1.9 MDa CCR4-NOT complex.

Its subcellular location is the cytoplasm. It localises to the nucleus. It catalyses the reaction S-ubiquitinyl-[E2 ubiquitin-conjugating enzyme]-L-cysteine + [acceptor protein]-L-lysine = [E2 ubiquitin-conjugating enzyme]-L-cysteine + N(6)-ubiquitinyl-[acceptor protein]-L-lysine.. The protein operates within protein modification; protein ubiquitination. In terms of biological role, E3 ubiquitin-protein ligase component of the CCR4-NOT core complex, which in the nucleus seems to be a general transcription factor, and in the cytoplasm the major mRNA deadenylase involved in mRNA turnover. The NOT protein subcomplex negatively regulates the basal and activated transcription of many genes. Preferentially affects TC-type TATA element-dependent transcription. Could directly or indirectly inhibit component(s) of the general transcription machinery. In the cytoplasm, catalyzes monoubiquitination of RPS7/es7 in response to stalled ribosomes, initiating a HEL2-dependent response that activates the No-Go Decay (NGD) pathway. The polypeptide is General negative regulator of transcription subunit 4 (MOT2) (Saccharomyces cerevisiae (strain ATCC 204508 / S288c) (Baker's yeast)).